The primary structure comprises 98 residues: HssA/B-like protein 36 (98 aa).

A disordered region spans residues 1–29; sequence MTLFSSISSISNPMTSSKSSISSFGSGTS.

It belongs to the hssA/B family.

The sequence is that of HssA/B-like protein 36 (hssl36) from Dictyostelium discoideum (Social amoeba).